Here is a 390-residue protein sequence, read N- to C-terminus: Delta-aminolevulinic acid dehydratase, chloroplastic (390 aa).

A chloroplast-targeting transit peptide spans 1–24 (MQMMQRNVVGQRPVAGSRRSLVVA). A disordered region spans residues 34 to 69 (VSTNGKHRTGVPEGTPIVTPQDLPSRPRRNRRSESF). The Schiff-base intermediate with substrate role is filled by K251. R261 and K281 together coordinate 5-aminolevulinate. E297 is a binding site for Mg(2+). K312 serves as the catalytic Schiff-base intermediate with substrate. S338 and Y377 together coordinate 5-aminolevulinate.

Belongs to the ALAD family. In terms of assembly, homooctamer. Requires Mg(2+) as cofactor.

It is found in the plastid. The protein resides in the chloroplast. It catalyses the reaction 2 5-aminolevulinate = porphobilinogen + 2 H2O + H(+). The protein operates within porphyrin-containing compound metabolism; protoporphyrin-IX biosynthesis; coproporphyrinogen-III from 5-aminolevulinate: step 1/4. In terms of biological role, catalyzes an early step in the biosynthesis of tetrapyrroles. Binds two molecules of 5-aminolevulinate per subunit, each at a distinct site, and catalyzes their condensation to form porphobilinogen. The protein is Delta-aminolevulinic acid dehydratase, chloroplastic (HEMB) of Chlamydomonas reinhardtii (Chlamydomonas smithii).